A 131-amino-acid polypeptide reads, in one-letter code: MSWQAYVDDHLMCEIEGHHLTSAAIIGHDGTVWAQSAAFPAFKPEEMANIMKDFDEPGFLAPTGLFLGPTKYMVIQGEPGAVIRGKKGSGGVTVKKTGQALVIGIYDEPMTPGQCNMVIEKLGDYLIEQGM.

It belongs to the profilin family. In terms of assembly, occurs in many kinds of cells as a complex with monomeric actin in a 1:1 ratio.

The protein localises to the cytoplasm. It localises to the cytoskeleton. In terms of biological role, binds to actin and affects the structure of the cytoskeleton. At high concentrations, profilin prevents the polymerization of actin, whereas it enhances it at low concentrations. By binding to PIP2, it inhibits the formation of IP3 and DG. This Cynodon dactylon (Bermuda grass) protein is Profilin (PRO1).